We begin with the raw amino-acid sequence, 549 residues long: Glucose-6-phosphate isomerase (549 aa).

Catalysis depends on Glu355, which acts as the Proton donor. Catalysis depends on residues His387 and Lys515.

This sequence belongs to the GPI family.

Its subcellular location is the cytoplasm. It catalyses the reaction alpha-D-glucose 6-phosphate = beta-D-fructose 6-phosphate. The protein operates within carbohydrate biosynthesis; gluconeogenesis. It functions in the pathway carbohydrate degradation; glycolysis; D-glyceraldehyde 3-phosphate and glycerone phosphate from D-glucose: step 2/4. Functionally, catalyzes the reversible isomerization of glucose-6-phosphate to fructose-6-phosphate. This Histophilus somni (strain 129Pt) (Haemophilus somnus) protein is Glucose-6-phosphate isomerase.